The chain runs to 199 residues: Prolactin-2 (199 aa).

3 disulfides stabilise this stretch: Cys-4-Cys-11, Cys-58-Cys-174, and Cys-191-Cys-199.

This sequence belongs to the somatotropin/prolactin family.

It is found in the secreted. This chain is Prolactin-2, found in Crocodylus novaeguineae (Crocodile).